The primary structure comprises 249 residues: ATP synthase subunit a, chloroplastic (249 aa).

Helical transmembrane passes span 38–58 (AQVL…AVLA), 97–117 (VPFI…GALL), 136–156 (INTT…AGLH), 201–221 (LVVA…MMFL), and 222–242 (GLFT…AYIG).

The protein belongs to the ATPase A chain family. F-type ATPases have 2 components, CF(1) - the catalytic core - and CF(0) - the membrane proton channel. CF(1) has five subunits: alpha(3), beta(3), gamma(1), delta(1), epsilon(1). CF(0) has four main subunits: a, b, b' and c.

Its subcellular location is the plastid. It localises to the chloroplast thylakoid membrane. Functionally, key component of the proton channel; it plays a direct role in the translocation of protons across the membrane. The sequence is that of ATP synthase subunit a, chloroplastic from Physcomitrium patens (Spreading-leaved earth moss).